The primary structure comprises 267 residues: Apolipoprotein A-I (267 aa).

Positions 1–18 (MKAAVLTLAVLFLTGSQA) are cleaved as a signal peptide. 2 repeat units span residues 68–89 (LKLLDNWDSVTSTFSKLREQLG) and 90–111 (PVTQEFWDNLEKETEGLRQEMS). Positions 68–267 (LKLLDNWDSV…EEYTKKLNTQ (200 aa)) are 10 X approximate tandem repeats. Met-110 carries the methionine sulfoxide modification. The stretch at 112–122 (KDLEEVKAKVQ) is one 3; half-length repeat. Repeat copies occupy residues 123-144 (PYLDDFQKKWQEEMELYRQKVE), 145-166 (PLRAELQEGARQKLHELQEKLS), 167-188 (PLGEEMRDRARAHVDALRTHLA), 189-210 (PYSDELRQRLAARLEALKENGG), and 211-232 (ARLAEYHAKATEHLSTLSEKAK). Met-136 carries the methionine sulfoxide modification. The 9; half-length repeat unit spans residues 233–243 (PALEDLRQGLL). The stretch at 244-267 (PVLESFKVSFLSALEEYTKKLNTQ) is repeat 10.

It belongs to the apolipoprotein A1/A4/E family. As to quaternary structure, homodimer. Interacts with APOA1BP and CLU. Component of a sperm activating protein complex (SPAP), consisting of APOA1, an immunoglobulin heavy chain, an immunoglobulin light chain and albumin. Interacts with NDRG1. Interacts with SCGB3A2. Interacts with NAXE and YJEFN3. In terms of processing, glycosylated. Palmitoylated. Post-translationally, phosphorylation sites are present in the extracellular medium. As to expression, major protein of plasma HDL, also found in chylomicrons.

It is found in the secreted. Functionally, participates in the reverse transport of cholesterol from tissues to the liver for excretion by promoting cholesterol efflux from tissues and by acting as a cofactor for the lecithin cholesterol acyltransferase (LCAT). As part of the SPAP complex, activates spermatozoa motility. The sequence is that of Apolipoprotein A-I (APOA1) from Pan troglodytes (Chimpanzee).